Here is a 649-residue protein sequence, read N- to C-terminus: L-ornithine N(5)-monooxygenase (649 aa).

FAD-binding positions include 72 to 80 (EKRGHFAWH) and Q91. K96 serves as a coordination point for substrate. V157 is a binding site for FAD. NADP(+) is bound by residues 289 to 292 (AGQS) and R314. Substrate-binding positions include 328–331 (NSAA) and N359. 359 to 361 (NYS) contributes to the NADP(+) binding site. The disordered stretch occupies residues 512–547 (AMQSDAVRSGKSSPGSGSDASSTSSQQTLASENSTE). Residues 520-536 (SGKSSPGSGSDASSTSS) show a composition bias toward low complexity. The span at 537–547 (QQTLASENSTE) shows a compositional bias: polar residues. An FAD-binding site is contributed by 569–571 (SLL). S572 serves as a coordination point for substrate. The tract at residues 585-611 (LLQRLPRTRRGTASSAATQPAASTVAS) is disordered. A compositionally biased stretch (low complexity) spans 596 to 611 (TASSAATQPAASTVAS).

It belongs to the lysine N(6)-hydroxylase/L-ornithine N(5)-oxygenase family. As to quaternary structure, homotetramer. FAD serves as cofactor.

The enzyme catalyses L-ornithine + NADPH + O2 = N(5)-hydroxy-L-ornithine + NADP(+) + H2O. It catalyses the reaction L-ornithine + NADH + O2 = N(5)-hydroxy-L-ornithine + NAD(+) + H2O. It participates in siderophore biosynthesis; ferrichrome biosynthesis. Functionally, catalyzes the conversion of L-ornithine to N(5)-hydroxyornithine, the first step in the biosynthesis of all hydroxamate-containing siderophores, such as ferrichrome. The sequence is that of L-ornithine N(5)-monooxygenase (SID1) from Mycosarcoma maydis (Corn smut fungus).